The following is a 270-amino-acid chain: 4-hydroxy-4-methyl-2-oxoglutarate aldolase tasA (270 aa).

His-49 acts as the Proton acceptor in catalysis. The a divalent metal cation site is built by Glu-156 and Asp-182. Asp-182 lines the substrate pocket.

This sequence belongs to the HpcH/HpaI aldolase family. Homohexamer; trimer of dimers. Co(2+) is required as a cofactor. Requires Mn(2+) as cofactor. Zn(2+) serves as cofactor. It depends on Fe(2+) as a cofactor. The cofactor is Mg(2+).

The enzyme catalyses 4-hydroxy-4-methyl-2-oxoglutarate = 2 pyruvate. The protein operates within secondary metabolite biosynthesis. 4-hydroxy-4-methyl-2-oxoglutarate aldolase; part of the gene cluster that mediates the biosynthesis of the tetramic acids Sch210971 and Sch210972, potential anti-HIV fungal natural product that contain a decalin core. The PKS module of tasS together with the enoylreductase tasC catalyze the formation of the polyketide unit which is then conjugated to 4-hydroxyl-4-methyl glutamate (HMG) by the condensation domain of the tasS NRPS module. One unique structural feature of Sch210971 and Sch210972 is the tetramic acid motif proposed to be derived from the non-proteinogenic amino acid HMG, by a Dieckmann-type condensation catalyzed by the reductase domain of tasS. The aldolase tasA catalyzes the aldol condensation of 2 molecules of pyruvic acid to yield the intermediate 4-hydroxyl-4-methyl-2-oxoglutarate (HMOG), which can then be stereoselectively transaminated, may be by tasG, to form HMG. The Diels-Alderase tas3 then uses the Dieckmann product of tasS as substrate and catalyzes the Diels-Alder cycloaddition to form the decalin ring of Sch210971 and Sch210972. In Hapsidospora irregularis, this protein is 4-hydroxy-4-methyl-2-oxoglutarate aldolase tasA.